A 158-amino-acid chain; its full sequence is Transcription elongation factor GreA (158 aa).

A coiled-coil region spans residues 10 to 76; that stretch reads TLEGKKKLEE…QIEKMIRNAE (67 aa).

Belongs to the GreA/GreB family.

Functionally, necessary for efficient RNA polymerase transcription elongation past template-encoded arresting sites. The arresting sites in DNA have the property of trapping a certain fraction of elongating RNA polymerases that pass through, resulting in locked ternary complexes. Cleavage of the nascent transcript by cleavage factors such as GreA or GreB allows the resumption of elongation from the new 3'terminus. GreA releases sequences of 2 to 3 nucleotides. This chain is Transcription elongation factor GreA, found in Halalkalibacterium halodurans (strain ATCC BAA-125 / DSM 18197 / FERM 7344 / JCM 9153 / C-125) (Bacillus halodurans).